Here is a 545-residue protein sequence, read N- to C-terminus: CTP synthase (545 aa).

The interval M1–L266 is amidoligase domain. CTP is bound at residue S14. S14 serves as a coordination point for UTP. ATP-binding positions include S15 to I20 and D72. Residues D72 and E140 each coordinate Mg(2+). CTP-binding positions include D147–E149, K187–Q192, and K223. UTP-binding positions include K187–Q192 and K223. K239 to V241 contributes to the ATP binding site. The 252-residue stretch at T291–R542 folds into the Glutamine amidotransferase type-1 domain. G352 serves as a coordination point for L-glutamine. C379 acts as the Nucleophile; for glutamine hydrolysis in catalysis. L-glutamine is bound by residues L380–Q383, E403, and R470. Catalysis depends on residues H515 and E517.

The protein belongs to the CTP synthase family. Homotetramer.

It carries out the reaction UTP + L-glutamine + ATP + H2O = CTP + L-glutamate + ADP + phosphate + 2 H(+). The catalysed reaction is L-glutamine + H2O = L-glutamate + NH4(+). The enzyme catalyses UTP + NH4(+) + ATP = CTP + ADP + phosphate + 2 H(+). It participates in pyrimidine metabolism; CTP biosynthesis via de novo pathway; CTP from UDP: step 2/2. Allosterically activated by GTP, when glutamine is the substrate; GTP has no effect on the reaction when ammonia is the substrate. The allosteric effector GTP functions by stabilizing the protein conformation that binds the tetrahedral intermediate(s) formed during glutamine hydrolysis. Inhibited by the product CTP, via allosteric rather than competitive inhibition. Its function is as follows. Catalyzes the ATP-dependent amination of UTP to CTP with either L-glutamine or ammonia as the source of nitrogen. Regulates intracellular CTP levels through interactions with the four ribonucleotide triphosphates. The chain is CTP synthase from Cronobacter sakazakii (strain ATCC BAA-894) (Enterobacter sakazakii).